We begin with the raw amino-acid sequence, 127 residues long: Fluoride-specific ion channel FluC (127 aa).

4 helical membrane-spanning segments follow: residues 4–24 (LLLA…LLSM), 35–55 (LGTL…FAWF), 71–91 (TGFC…VFLL), and 103–123 (VFVN…LFSA). 2 residues coordinate Na(+): Gly75 and Thr78.

This sequence belongs to the fluoride channel Fluc/FEX (TC 1.A.43) family.

It is found in the cell inner membrane. It carries out the reaction fluoride(in) = fluoride(out). With respect to regulation, na(+) is not transported, but it plays an essential structural role and its presence is essential for fluoride channel function. Its function is as follows. Fluoride-specific ion channel. Important for reducing fluoride concentration in the cell, thus reducing its toxicity. The polypeptide is Fluoride-specific ion channel FluC (Escherichia coli O7:K1 (strain IAI39 / ExPEC)).